The following is a 513-amino-acid chain: MSVELWQQCVELLRDELPAQQFNTWIRPLQVEAEGDELRVYAPNRFVLDWVNEKYLGRVLELLDEHGNGMAPVLSLLIGSKRSSAPRAAPNAPLAAAASQALQAAAANAAPAAAPAPAPAPTSAPAKKAAAQKAAEVSEEPSRDSFDPMAGASSQQAPVRAEQRTVQVEGALKHTSYLNRTFTFENFVEGKSNQLARAAAWQVADNPKHGYNPLFLYGGVGLGKTHLMHAVGNHLLKKNPNAKVVYLHSERFVADMVKALQLNAINEFKRFYRSVDALLIDDIQFFARKERSQEEFFHTFNALLEGGQQVILTSDRYPKEIEGLEERLKSRFGWGLTVAVEPPELETRVAILMKKADQAKVELPHDAAFFIAQRIRSNVRELEGALKRVIAHSHFMGRDITIELIRESLKDLLALQDKLVSVDNIQRTVAEYYKIKISDLLSKRRSRSVARPRQVAMALSKELTNHSLPEIGDVFGGRDHTTVLHACRKINELKESDADIREDYKNLLRTLTT.

The interval 1-87 (MSVELWQQCV…IGSKRSSAPR (87 aa)) is domain I, interacts with DnaA modulators. Residues 87-176 (RAAPNAPLAA…QVEGALKHTS (90 aa)) form a domain II region. The disordered stretch occupies residues 113 to 163 (AAPAPAPAPTSAPAKKAAAQKAAEVSEEPSRDSFDPMAGASSQQAPVRAEQ). Residues 123 to 135 (SAPAKKAAAQKAA) are compositionally biased toward low complexity. Residues 177-393 (YLNRTFTFEN…GALKRVIAHS (217 aa)) form a domain III, AAA+ region region. Positions 221, 223, 224, and 225 each coordinate ATP. The domain IV, binds dsDNA stretch occupies residues 394–513 (HFMGRDITIE…YKNLLRTLTT (120 aa)).

The protein belongs to the DnaA family. As to quaternary structure, oligomerizes as a right-handed, spiral filament on DNA at oriC.

The protein resides in the cytoplasm. Plays an essential role in the initiation and regulation of chromosomal replication. ATP-DnaA binds to the origin of replication (oriC) to initiate formation of the DNA replication initiation complex once per cell cycle. Binds the DnaA box (a 9 base pair repeat at the origin) and separates the double-stranded (ds)DNA. Forms a right-handed helical filament on oriC DNA; dsDNA binds to the exterior of the filament while single-stranded (ss)DNA is stabiized in the filament's interior. The ATP-DnaA-oriC complex binds and stabilizes one strand of the AT-rich DNA unwinding element (DUE), permitting loading of DNA polymerase. After initiation quickly degrades to an ADP-DnaA complex that is not apt for DNA replication. Binds acidic phospholipids. The chain is Chromosomal replication initiator protein DnaA from Pseudomonas fluorescens (strain ATCC BAA-477 / NRRL B-23932 / Pf-5).